The sequence spans 262 residues: Tryptophan synthase alpha chain (262 aa).

Active-site proton acceptor residues include glutamate 49 and aspartate 60.

This sequence belongs to the TrpA family. Tetramer of two alpha and two beta chains.

It catalyses the reaction (1S,2R)-1-C-(indol-3-yl)glycerol 3-phosphate + L-serine = D-glyceraldehyde 3-phosphate + L-tryptophan + H2O. The protein operates within amino-acid biosynthesis; L-tryptophan biosynthesis; L-tryptophan from chorismate: step 5/5. Functionally, the alpha subunit is responsible for the aldol cleavage of indoleglycerol phosphate to indole and glyceraldehyde 3-phosphate. This chain is Tryptophan synthase alpha chain, found in Aquifex aeolicus (strain VF5).